Reading from the N-terminus, the 450-residue chain is tRNA modification GTPase MnmE (450 aa).

Residues Arg-23, Glu-79, and Lys-118 each contribute to the (6S)-5-formyl-5,6,7,8-tetrahydrofolate site. In terms of domain architecture, TrmE-type G spans 214–374 (GITLILVGKP…LKEHILNKVG (161 aa)). Asn-224 lines the K(+) pocket. GTP is bound by residues 224–229 (NAGKSS), 243–249 (TSIAGTT), and 268–271 (DTAG). Ser-228 is a Mg(2+) binding site. Residues Thr-243, Ile-245, and Thr-248 each contribute to the K(+) site. Thr-249 provides a ligand contact to Mg(2+). Lys-450 contacts (6S)-5-formyl-5,6,7,8-tetrahydrofolate.

It belongs to the TRAFAC class TrmE-Era-EngA-EngB-Septin-like GTPase superfamily. TrmE GTPase family. As to quaternary structure, homodimer. Heterotetramer of two MnmE and two MnmG subunits. Requires K(+) as cofactor.

The protein localises to the cytoplasm. Its function is as follows. Exhibits a very high intrinsic GTPase hydrolysis rate. Involved in the addition of a carboxymethylaminomethyl (cmnm) group at the wobble position (U34) of certain tRNAs, forming tRNA-cmnm(5)s(2)U34. The chain is tRNA modification GTPase MnmE from Francisella tularensis subsp. tularensis (strain FSC 198).